Consider the following 284-residue polypeptide: NH(3)-dependent NAD(+) synthetase (284 aa).

Gly-51–Ser-58 contacts ATP. Asp-57 contacts Mg(2+). Deamido-NAD(+) is bound at residue Arg-148. An ATP-binding site is contributed by Thr-168. Residue Glu-173 participates in Mg(2+) binding. Residues Lys-181 and Asp-188 each contribute to the deamido-NAD(+) site. Residues Lys-197 and Thr-219 each contribute to the ATP site. His-268–Lys-269 provides a ligand contact to deamido-NAD(+).

The protein belongs to the NAD synthetase family. In terms of assembly, homodimer.

The enzyme catalyses deamido-NAD(+) + NH4(+) + ATP = AMP + diphosphate + NAD(+) + H(+). Its pathway is cofactor biosynthesis; NAD(+) biosynthesis; NAD(+) from deamido-NAD(+) (ammonia route): step 1/1. Catalyzes the ATP-dependent amidation of deamido-NAD to form NAD. Uses ammonia as a nitrogen source. This Burkholderia mallei (strain NCTC 10247) protein is NH(3)-dependent NAD(+) synthetase.